The primary structure comprises 290 residues: 33 kDa chaperonin (290 aa).

2 disulfide bridges follow: Cys235-Cys237 and Cys268-Cys271.

The protein belongs to the HSP33 family. Post-translationally, under oxidizing conditions two disulfide bonds are formed involving the reactive cysteines. Under reducing conditions zinc is bound to the reactive cysteines and the protein is inactive.

It localises to the cytoplasm. In terms of biological role, redox regulated molecular chaperone. Protects both thermally unfolding and oxidatively damaged proteins from irreversible aggregation. Plays an important role in the bacterial defense system toward oxidative stress. The sequence is that of 33 kDa chaperonin from Streptococcus pyogenes serotype M49 (strain NZ131).